Reading from the N-terminus, the 219-residue chain is MNQRGEAPISVIKRLPVYLRVLDNLVKRDIEVVSSKSLSKETGFTAEQIRKDLAFFGAFGTRGTGYNTNYLRERVLRIIGLDKQTNVAIVGAGHLGTAFARYNVRENPYTSVVGLFDVSPDIVGENIEGVPVYHLNDLQEIVRKERVQVGVITVPAVHAQEVVDRLVEENVKALLNFAPAKLTAPEDVRIHNVDLTIELQSLIYFAKDELNEESTQDLE.

The H-T-H motif DNA-binding region spans 17 to 56; it reads VYLRVLDNLVKRDIEVVSSKSLSKETGFTAEQIRKDLAFF. 91-96 provides a ligand contact to NAD(+); it reads GAGHLG.

Belongs to the transcriptional regulatory Rex family. In terms of assembly, homodimer.

It localises to the cytoplasm. Modulates transcription in response to changes in cellular NADH/NAD(+) redox state. This Natranaerobius thermophilus (strain ATCC BAA-1301 / DSM 18059 / JW/NM-WN-LF) protein is Redox-sensing transcriptional repressor Rex.